A 187-amino-acid chain; its full sequence is PRA1 family protein G1 (187 aa).

A run of 3 helical transmembrane segments spans residues L84 to L104, V125 to Q145, and C146 to N166.

The protein belongs to the PRA1 family. Expressed in roots and lateral roots.

The protein resides in the endosome membrane. May be involved in both secretory and endocytic intracellular trafficking in the endosomal/prevacuolar compartments. The chain is PRA1 family protein G1 (PRA1G1) from Arabidopsis thaliana (Mouse-ear cress).